We begin with the raw amino-acid sequence, 150 residues long: MYSILIACLVLLLCLIIYVGHRADHARKYLEGMWHGDPVFLKQSGLQSFYLYIQPDHTCFFSVVNKNGEKLMETKIPCTITNKIYMFFKPIFEFHVVMEDIHSYFPKQFNFLLDSTEGKLILENNHVIYAVLYKDNFATALGKTVKKYIT.

The N-terminal stretch at 1-23 (MYSILIACLVLLLCLIIYVGHRA) is a signal peptide.

Belongs to the asfivirus EP152R family.

The protein localises to the virion. This is an uncharacterized protein from African swine fever virus (isolate Tick/South Africa/Pretoriuskop Pr4/1996) (ASFV).